A 795-amino-acid chain; its full sequence is Phenylalanine--tRNA ligase beta subunit (795 aa).

The tRNA-binding domain maps to 39–148; sequence AGDFSGVVVG…QNAPVGTNLR (110 aa). Residues 401 to 476 enclose the B5 domain; that stretch reads PKLNQVSLRR…RIYGYNSIPN (76 aa). Mg(2+)-binding residues include Asp454, Asp460, Glu463, and Glu464. An FDX-ACB domain is found at 701–794; it reads SRFPANRRDL…LKQRFNAYLR (94 aa).

This sequence belongs to the phenylalanyl-tRNA synthetase beta subunit family. Type 1 subfamily. In terms of assembly, tetramer of two alpha and two beta subunits. Mg(2+) serves as cofactor.

Its subcellular location is the cytoplasm. It catalyses the reaction tRNA(Phe) + L-phenylalanine + ATP = L-phenylalanyl-tRNA(Phe) + AMP + diphosphate + H(+). The chain is Phenylalanine--tRNA ligase beta subunit (pheT) from Pasteurella multocida (strain Pm70).